The primary structure comprises 369 residues: Beta-1,3-galactosyltransferase 9 (369 aa).

At 1-12 the chain is on the cytoplasmic side; that stretch reads MQVTFCRLRTHQ. Residues 13–33 form a helical; Signal-anchor for type II membrane protein membrane-spanning segment; it reads WCFILFNVILFHALLFGTDFV. At 34-369 the chain is on the lumenal side; the sequence is EEYFLHSLPY…IKNNLMYFAD (336 aa). Residues Asn-66, Asn-96, and Asn-109 are each glycosylated (N-linked (GlcNAc...) asparagine).

The protein belongs to the glycosyltransferase 31 family.

The protein localises to the golgi apparatus membrane. In terms of biological role, putative glycosyltransferase that could catalyze the transfer of galactose residues from UDP-alpha-D-galactose. The protein is Beta-1,3-galactosyltransferase 9 of Homo sapiens (Human).